Consider the following 457-residue polypeptide: uncharacterized protein (457 aa).

Residues 6–64 (PVHKGEVLDVTIMDLTYQGMGVAKVDNYPIFIENALPEEKITVKVTKTTKNFAFGDVEK) enclose the TRAM domain. The S-adenosyl-L-methionine site is built by Gln287, Tyr316, Glu337, and Asp385. The active-site Nucleophile is the Cys412.

It belongs to the class I-like SAM-binding methyltransferase superfamily. RNA M5U methyltransferase family.

This is an uncharacterized protein from Lactiplantibacillus plantarum (strain ATCC BAA-793 / NCIMB 8826 / WCFS1) (Lactobacillus plantarum).